We begin with the raw amino-acid sequence, 445 residues long: Tubulin beta-4B chain (445 aa).

An MREI motif motif is present at residues 1 to 4 (MREI). Gln-11 contributes to the GTP binding site. Phosphothreonine is present on Thr-55. Position 58 is an N6-acetyllysine (Lys-58). Residues Glu-69, Ser-138, Gly-142, Thr-143, and Gly-144 each coordinate GTP. Position 69 (Glu-69) interacts with Mg(2+). At Ser-172 the chain carries Phosphoserine; by CDK1. GTP is bound by residues Asn-204 and Asn-226. The interval 426 to 445 (QDATAEEEGEFEEEAEEEVA) is disordered. The span at 429–445 (TAEEEGEFEEEAEEEVA) shows a compositional bias: acidic residues. Residue Glu-438 is modified to 5-glutamyl polyglutamate.

The protein belongs to the tubulin family. Dimer of alpha and beta chains. A typical microtubule is a hollow water-filled tube with an outer diameter of 25 nm and an inner diameter of 15 nM. Alpha-beta heterodimers associate head-to-tail to form protofilaments running lengthwise along the microtubule wall with the beta-tubulin subunit facing the microtubule plus end conferring a structural polarity. Microtubules usually have 13 protofilaments but different protofilament numbers can be found in some organisms and specialized cells. Component of sperm flagellar doublet microtubules. The cofactor is Mg(2+). Post-translationally, some glutamate residues at the C-terminus are polyglycylated, resulting in polyglycine chains on the gamma-carboxyl group. Glycylation is mainly limited to tubulin incorporated into axonemes (cilia and flagella) whereas glutamylation is prevalent in neuronal cells, centrioles, axonemes, and the mitotic spindle. Both modifications can coexist on the same protein on adjacent residues, and lowering polyglycylation levels increases polyglutamylation, and reciprocally. Cilia and flagella glycylation is required for their stability and maintenance. Flagella glycylation controls sperm motility. Some glutamate residues at the C-terminus are polyglutamylated, resulting in polyglutamate chains on the gamma-carboxyl group. Polyglutamylation plays a key role in microtubule severing by spastin (SPAST). SPAST preferentially recognizes and acts on microtubules decorated with short polyglutamate tails: severing activity by SPAST increases as the number of glutamates per tubulin rises from one to eight, but decreases beyond this glutamylation threshold. Glutamylation is also involved in cilia motility. In terms of processing, phosphorylated on Ser-172 by CDK1 during the cell cycle, from metaphase to telophase, but not in interphase. This phosphorylation inhibits tubulin incorporation into microtubules.

It is found in the cytoplasm. It localises to the cytoskeleton. Its subcellular location is the flagellum axoneme. Tubulin is the major constituent of microtubules, a cylinder consisting of laterally associated linear protofilaments composed of alpha- and beta-tubulin heterodimers. Microtubules grow by the addition of GTP-tubulin dimers to the microtubule end, where a stabilizing cap forms. Below the cap, tubulin dimers are in GDP-bound state, owing to GTPase activity of alpha-tubulin. In Rattus norvegicus (Rat), this protein is Tubulin beta-4B chain (Tubb4b).